A 490-amino-acid polypeptide reads, in one-letter code: 5'-3' exonuclease PLD3 (490 aa).

Residues Met1–Trp38 are Cytoplasmic-facing. A helical; Signal-anchor for type II membrane protein transmembrane segment spans residues Val39–Leu59. Residues Trp60–Leu490 lie on the Lumenal side of the membrane. 2 disulfides stabilise this stretch: Cys77-Cys239 and Cys81-Cys237. Asn97 and Asn132 each carry an N-linked (GlcNAc...) asparagine glycan. One can recognise a PLD phosphodiesterase 1 domain in the interval Thr196–Ser223. Catalysis depends on residues His201, Lys203, and Asp208. Catalysis depends on His201, which acts as the Proton donor. Residues His201 and Lys203 each contribute to the phosphate site. Position 218 (Asn218) interacts with phosphate. N-linked (GlcNAc...) asparagine glycosylation is found at Asn236, Asn284, and Asn387. Cys366 and Cys487 form a disulfide bridge. The PLD phosphodiesterase 2 domain occupies Tyr411–Tyr437. His416 lines the phosphate pocket. His416 functions as the Nucleophile in the catalytic mechanism. Phe438 lines the Mg(2+) pocket.

Belongs to the phospholipase D family. Homodimer. Interacts with APP. In terms of processing, N-glycosylated. Proteolytically processed to a soluble active form that is stable within endosomes and lysosomes. During transport through the secretory pathway becomes proteolysed by cysteine proteases, thereby releasing a stable soluble lysosomal lumenal polypeptide, whereas the transmembrane-bound fragment is rapidly degraded. Its transport route to lysosomes involves ubiquitination and the ESCRT complex. Post-translationally, ubiquitinated at N-terminus. Ubiquitination mediates sorting into lysosomes. Widely expressed. In the brain, high levels of expression are detected in the frontal, temporal and occipital cortices and hippocampus. Expressed at low level in corpus callosum. Expressed in plasmacytoid dendritic cells and monocytes (at protein level).

It is found in the endoplasmic reticulum membrane. It localises to the lysosome lumen. The protein localises to the early endosome membrane. The protein resides in the late endosome membrane. Its subcellular location is the golgi apparatus membrane. It is found in the endosome membrane. The enzyme catalyses Exonucleolytic cleavage in the 5'- to 3'-direction to yield nucleoside 3'-phosphates.. It catalyses the reaction a 5'-end 5'-dephospho-ribonucleotidyl-ribonucleotide-RNA + H2O = a ribonucleoside 3'-phosphate + a 5'-end dephospho-ribonucleoside-RNA + H(+). The catalysed reaction is a ribonucleoside 3'-phosphate-2'-3'-cyclophospho-GMP + H2O = a ribonucleoside 3'-phosphate + 2',3'-cyclophospho-GMP + H(+). It carries out the reaction a 5'-end 5'-dephospho-2'-deoxyribonucleotidyl-2'-deoxyribonucleotide in single-stranded DNA + H2O = a 5'-end dephospho-2'-deoxyribonucleoside in single-stranded DNA + a 2'-deoxyribonucleoside 3'-phosphate + H(+). The enzyme catalyses a 5'-end 5'-phospho-2'-deoxyribonucleotide in single-stranded DNA + H2O = a 5'-end 5'-dephospho-2'-deoxyribonucleotide in single-stranded DNA + phosphate. It catalyses the reaction a 3-lyso-sn-glycero-1-phospho-(3'-acyl-1'-sn-glycerol) + a 1-acyl-sn-glycerol = a 3-acyl-sn-glycero-1-phospho-(3'-acyl-1'-sn-glycerol) + glycerol. The catalysed reaction is 3-lyso-sn-glycero-1-phospho-(3'-(9Z-octadecenoyl)-1'-sn-glycerol) + 1-(9Z-octadecenoyl)-sn-glycerol = 3-(9Z-octadecenoyl)-sn-glycero-1-phospho-(3'-(9Z-octadecenoyl)-1'-sn-glycerol) + glycerol. The exonuclease activity toward ssDNA substrate is Ca(2+) and Mg(2+)-independent, but it is inhibited by Fe(2+), Cu(2+) and to a lesser extent Zn(2+) ions. 5'-&gt;3' exonuclease that hydrolyzes the phosphodiester bond of single-stranded DNA (ssDNA) and RNA molecules to form nucleoside 3'-monophosphates and 5'-end 5'-hydroxy deoxyribonucleotide/ribonucleotide fragments. Partially redundant with PLD4, can cleave all four nucleotides displaying higher efficiency for ssDNA and RNA fragments initiated with uridine and guanosine residues and lower efficiency for cytidine-initiated substrates. As a result, it does not always degrade polynucleotides to the single nucleotide level, it can stall at specific sites sparing certain fragments from exonucleolytic degradation. Processes self and pathogenic ssDNA and RNA molecules that reach the endolysosomal compartment via phagocytosis or autophagy and may serve as 'danger' signals for recognition by innate immune receptors such as toll-like receptors (TLRs). Degrades mitochondrial CpG-rich ssDNA fragments to prevent TLR9 activation and autoinflammatory response, but it can cleave viral RNA to generate ligands for TLR7 activation and initiate antiviral immune responses. In plasmacytoid dendritic cells, it cooperates with endonuclease RNASET2 to release 2',3'-cyclic guanosine monophosphate (2',3'-cGMP), a potent stimulatory ligand for TLR7. Produces 2',3'-cGMPs and cytidine-rich RNA fragments that occupy TLR7 ligand-binding pockets and trigger a signaling-competent state. Can exert polynucleotide phosphatase activity toward 5'-phosphorylated ssDNA substrates although at a slow rate. Transphosphatidylase that catalyzes the exchange with R to S stereo-inversion of the glycerol moiety between (S,R)-lysophosphatidylglycerol (LPG) and monoacylglycerol (MAG) substrates to yield (S,S)-bis(monoacylglycero)phosphate (BMP). Can synthesize a variety of (S,S)-BMPs representing the main phospholipid constituent of lysosomal intralumenal vesicle (ILV) membranes that bind acid hydrolases for lipid degradation. Regulates the homeostasis and interorganellar communication of the endolysosomal system with an overall impact on cellular removal of dysfunctional organelles via autophagy as well as proper protein and lipid turnover. May play a role in myotube formation in response to ER stress. This is 5'-3' exonuclease PLD3 from Homo sapiens (Human).